Here is an 82-residue protein sequence, read N- to C-terminus: Cytochrome b559 subunit alpha (82 aa).

Residues 22-36 (VIHSITIPALFIAGW) traverse the membrane as a helical segment. Heme is bound at residue histidine 24.

The protein belongs to the PsbE/PsbF family. Heterodimer of an alpha subunit and a beta subunit. PSII is composed of 1 copy each of membrane proteins PsbA, PsbB, PsbC, PsbD, PsbE, PsbF, PsbH, PsbI, PsbJ, PsbK, PsbL, PsbM, PsbT, PsbX, PsbY, PsbZ, Psb30/Ycf12, peripheral proteins PsbO, CyanoQ (PsbQ), PsbU, PsbV and a large number of cofactors. It forms dimeric complexes. Heme b serves as cofactor.

The protein resides in the cellular thylakoid membrane. Its function is as follows. This b-type cytochrome is tightly associated with the reaction center of photosystem II (PSII). PSII is a light-driven water:plastoquinone oxidoreductase that uses light energy to abstract electrons from H(2)O, generating O(2) and a proton gradient subsequently used for ATP formation. It consists of a core antenna complex that captures photons, and an electron transfer chain that converts photonic excitation into a charge separation. The protein is Cytochrome b559 subunit alpha of Trichodesmium erythraeum (strain IMS101).